Consider the following 394-residue polypeptide: Argininosuccinate synthase (394 aa).

ATP is bound by residues 7-15 (AYSGGLDTS) and Ala-34. Positions 85 and 90 each coordinate L-citrulline. Gly-115 contacts ATP. L-aspartate contacts are provided by Thr-117, Asn-121, and Asp-122. Asn-121 is a binding site for L-citrulline. The L-citrulline site is built by Arg-125, Ser-176, Ser-185, Glu-261, and Tyr-273.

Belongs to the argininosuccinate synthase family. Type 1 subfamily. As to quaternary structure, homotetramer.

It localises to the cytoplasm. The enzyme catalyses L-citrulline + L-aspartate + ATP = 2-(N(omega)-L-arginino)succinate + AMP + diphosphate + H(+). It functions in the pathway amino-acid biosynthesis; L-arginine biosynthesis; L-arginine from L-ornithine and carbamoyl phosphate: step 2/3. The protein is Argininosuccinate synthase of Ehrlichia ruminantium (strain Gardel).